The sequence spans 292 residues: Elongation factor Ts (292 aa).

The segment at 80–83 (TDFV) is involved in Mg(2+) ion dislocation from EF-Tu.

Belongs to the EF-Ts family.

The protein resides in the cytoplasm. In terms of biological role, associates with the EF-Tu.GDP complex and induces the exchange of GDP to GTP. It remains bound to the aminoacyl-tRNA.EF-Tu.GTP complex up to the GTP hydrolysis stage on the ribosome. The sequence is that of Elongation factor Ts from Oenococcus oeni (strain ATCC BAA-331 / PSU-1).